We begin with the raw amino-acid sequence, 299 residues long: Maintenance of mitochondrial morphology protein 1 (299 aa).

Residues 1 to 15 (MTNIIFSLQPTFTQG) lie on the Lumenal side of the membrane. The chain crosses the membrane as a helical span at residues 16–36 (LILGQLSVLVLLGLILKYLFL). At 37–299 (DSTKNPFETT…QEESKRQEEA (263 aa)) the chain is on the cytoplasmic side. Positions 47 to 68 (SYHPQFDRKPARKQQAQDSQSQ) are disordered. One can recognise an SMP-LTD domain in the interval 73 to 281 (DVESLDWFNL…LPGLASVAEA (209 aa)).

The protein belongs to the MMM1 family. Homodimer. Component of the ER-mitochondria encounter structure (ERMES) or MDM complex, composed of MMM1, MDM10, MDM12 and MDM34. An MMM1 homodimer associates with one molecule of MDM12 on each side in a pairwise head-to-tail manner, and the SMP-LTD domains of MMM1 and MDM12 generate a continuous hydrophobic tunnel for phospholipid trafficking.

The protein localises to the endoplasmic reticulum membrane. Its function is as follows. Component of the ERMES/MDM complex, which serves as a molecular tether to connect the endoplasmic reticulum (ER) and mitochondria. Components of this complex are involved in the control of mitochondrial shape and protein biogenesis, and function in nonvesicular lipid trafficking between the ER and mitochondria. The MDM12-MMM1 subcomplex functions in the major beta-barrel assembly pathway that is responsible for biogenesis of all outer membrane beta-barrel proteins, and acts in a late step after the SAM complex. The MDM10-MDM12-MMM1 subcomplex further acts in the TOM40-specific pathway after the action of the MDM12-MMM1 complex. Essential for establishing and maintaining the structure of mitochondria and maintenance of mtDNA nucleoids. The chain is Maintenance of mitochondrial morphology protein 1 from Coprinopsis cinerea (strain Okayama-7 / 130 / ATCC MYA-4618 / FGSC 9003) (Inky cap fungus).